A 472-amino-acid polypeptide reads, in one-letter code: Protein c-ets-2-B (472 aa).

The 86-residue stretch at 85–170 (DTFNGFAKER…EHLEEMMKEY (86 aa)) folds into the PNT domain. The ETS DNA-binding region spans 366-446 (IQLWQFLLEL…SGKRYVYRFV (81 aa)).

Belongs to the ETS family.

It is found in the nucleus. In terms of biological role, probable transcription factor. This is Protein c-ets-2-B (ets2-b) from Xenopus laevis (African clawed frog).